The following is a 403-amino-acid chain: Histidine decarboxylase (403 aa).

Histidine 120 is a binding site for substrate. Lysine 233 carries the post-translational modification N6-(pyridoxal phosphate)lysine.

This sequence belongs to the group II decarboxylase family. In terms of assembly, homotetramer. Pyridoxal 5'-phosphate is required as a cofactor.

The enzyme catalyses L-histidine + H(+) = histamine + CO2. This chain is Histidine decarboxylase, found in Pseudomonas entomophila (strain L48).